The chain runs to 446 residues: 5-hydroxytryptamine receptor 7 (446 aa).

The Extracellular portion of the chain corresponds to 1 to 84; the sequence is MMGVNSSGRP…INYGRAEKVV (84 aa). N-linked (GlcNAc...) asparagine glycans are attached at residues Asn5 and Asn67. The helical transmembrane segment at 85 to 109 threads the bilayer; that stretch reads IGSILTLITLLTIAGNCLVVISVCF. Over 110–119 the chain is Cytoplasmic; the sequence is VKKLRQPSNY. Residues 120–141 form a helical membrane-spanning segment; that stretch reads LIVSLALADLSVAVAVIPFVSV. Residues 142-153 are Extracellular-facing; it reads TDLIGGKWIFGH. A helical membrane pass occupies residues 154-179; sequence FFCNVFIAMDVMCCTASIMTLCVISI. An intrachain disulfide couples Cys156 to Cys232. Asp163 serves as a coordination point for serotonin. Residues 180–199 lie on the Cytoplasmic side of the membrane; that stretch reads DRYLGITRPLTYPVRQNGKC. Residues 200–220 traverse the membrane as a helical segment; sequence MPKMILSVWLLSASITLPPLF. The Extracellular portion of the chain corresponds to 221–238; sequence GWAQNVNDDKVCLISQDF. A helical transmembrane segment spans residues 239–261; the sequence is GYTIYSTAVAFYIPMSVMLFMYY. Topologically, residues 262 to 327 are cytoplasmic; sequence RIYKAARKSA…SIFKREQKAA (66 aa). The chain crosses the membrane as a helical span at residues 328–353; the sequence is TTLGIIVGAFTVCWLPFFLLSTARPF. Topologically, residues 354–364 are extracellular; it reads ICGTACSCIPL. The helical transmembrane segment at 365 to 388 threads the bilayer; the sequence is WVERTCLWLGYANSLINPFIYAFF. At 389 to 446 the chain is on the cytoplasmic side; it reads NRDLRTTYRSLLQCQYRNINRKLSAAGMHEALKLAERPERPECVLQNSDYCRKKGHDS. A lipid anchor (S-palmitoyl cysteine) is attached at Cys402.

This sequence belongs to the G-protein coupled receptor 1 family.

The protein localises to the cell membrane. Its function is as follows. G-protein coupled receptor for 5-hydroxytryptamine (serotonin), a biogenic hormone that functions as a neurotransmitter, a hormone and a mitogen. Ligand binding causes a conformation change that triggers signaling via guanine nucleotide-binding proteins (G proteins) and modulates the activity of downstream effectors. HTR7 is coupled to G(s) G alpha proteins and mediates activation of adenylate cyclase activity. This is 5-hydroxytryptamine receptor 7 (HTR7) from Cavia porcellus (Guinea pig).